Consider the following 161-residue polypeptide: Large ribosomal subunit protein uL10 (161 aa).

It belongs to the universal ribosomal protein uL10 family. Part of the ribosomal stalk of the 50S ribosomal subunit. The N-terminus interacts with L11 and the large rRNA to form the base of the stalk. The C-terminus forms an elongated spine to which L12 dimers bind in a sequential fashion forming a multimeric L10(L12)X complex.

Its function is as follows. Forms part of the ribosomal stalk, playing a central role in the interaction of the ribosome with GTP-bound translation factors. This chain is Large ribosomal subunit protein uL10, found in Campylobacter fetus subsp. fetus (strain 82-40).